We begin with the raw amino-acid sequence, 365 residues long: tRNA/tmRNA (uracil-C(5))-methyltransferase (365 aa).

The S-adenosyl-L-methionine site is built by glutamine 189, tyrosine 217, asparagine 222, glutamate 238, and aspartate 298. The active-site Nucleophile is the cysteine 323. Glutamate 357 serves as the catalytic Proton acceptor.

This sequence belongs to the class I-like SAM-binding methyltransferase superfamily. RNA M5U methyltransferase family. TrmA subfamily.

It carries out the reaction uridine(54) in tRNA + S-adenosyl-L-methionine = 5-methyluridine(54) in tRNA + S-adenosyl-L-homocysteine + H(+). The enzyme catalyses uridine(341) in tmRNA + S-adenosyl-L-methionine = 5-methyluridine(341) in tmRNA + S-adenosyl-L-homocysteine + H(+). In terms of biological role, dual-specificity methyltransferase that catalyzes the formation of 5-methyluridine at position 54 (m5U54) in all tRNAs, and that of position 341 (m5U341) in tmRNA (transfer-mRNA). This Shewanella sediminis (strain HAW-EB3) protein is tRNA/tmRNA (uracil-C(5))-methyltransferase.